A 375-amino-acid polypeptide reads, in one-letter code: MEVLSEQQLFFMRKAVALGEKGRIFAPPNPWVGCVIVKNGCVIGEGWHQGIGSPHAEVCAVQDQKCSLEGAEVFVTLEPCCHFGRTPPCVDLLIKSKVAAVYVGLLDPDPRVCKKGVARLQAAGIPVYVGVGSQEAKTSLQPYLYQRERGLPWVVMKTAASLDGQTADRGGSSQWISGELARADVGKLRAESQAIIVGARTVCLDNPRLSARFPHGDLYERQPLRVVVDSRGTVPLESRVFDLSSGSTLFATTQQCPKEYIQKLKDLGVEVWESSSHQVDLKGLLRYLAERGCLQVLVEGGAQLHSAFWQQKLVNAGVIYWGPKFLGDQGQPMLRDLQLSLVTAEHVRITETSLVRDSVKTCFECLEQESVDKKG.

Positions 1-150 (MEVLSEQQLF…QPYLYQRERG (150 aa)) are deaminase. The 122-residue stretch at 6–127 (EQQLFFMRKA…ARLQAAGIPV (122 aa)) folds into the CMP/dCMP-type deaminase domain. His-55 serves as a coordination point for Zn(2+). Glu-57 functions as the Proton donor in the catalytic mechanism. Zn(2+) is bound by residues Cys-80 and Cys-89. Residues 151–375 (LPWVVMKTAA…LEQESVDKKG (225 aa)) form a reductase region. An NADP(+)-binding site is contributed by Ala-159. A substrate-binding site is contributed by Ser-173. Trp-175 is an NADP(+) binding site. Position 189 (Arg-189) interacts with substrate. NADP(+)-binding residues include Thr-201 and Asp-205. Substrate-binding residues include Leu-209 and Arg-212. Ser-230 is a binding site for NADP(+). Glu-299 is a binding site for substrate. NADP(+) is bound at residue 301-307 (GAQLHSA).

The protein in the N-terminal section; belongs to the cytidine and deoxycytidylate deaminase family. This sequence in the C-terminal section; belongs to the HTP reductase family. Requires Zn(2+) as cofactor.

It carries out the reaction 2,5-diamino-6-hydroxy-4-(5-phosphoribosylamino)-pyrimidine + H2O + H(+) = 5-amino-6-(5-phospho-D-ribosylamino)uracil + NH4(+). The catalysed reaction is 5-amino-6-(5-phospho-D-ribitylamino)uracil + NADP(+) = 5-amino-6-(5-phospho-D-ribosylamino)uracil + NADPH + H(+). It functions in the pathway cofactor biosynthesis; riboflavin biosynthesis; 5-amino-6-(D-ribitylamino)uracil from GTP: step 2/4. It participates in cofactor biosynthesis; riboflavin biosynthesis; 5-amino-6-(D-ribitylamino)uracil from GTP: step 3/4. In terms of biological role, converts 2,5-diamino-6-(ribosylamino)-4(3h)-pyrimidinone 5'-phosphate into 5-amino-6-(ribosylamino)-2,4(1h,3h)-pyrimidinedione 5'-phosphate. This chain is Riboflavin biosynthesis protein RibD (ribD), found in Chlamydia trachomatis serovar D (strain ATCC VR-885 / DSM 19411 / UW-3/Cx).